Here is a 177-residue protein sequence, read N- to C-terminus: Large ribosomal subunit protein uL6 (177 aa).

The protein belongs to the universal ribosomal protein uL6 family. Part of the 50S ribosomal subunit.

In terms of biological role, this protein binds to the 23S rRNA, and is important in its secondary structure. It is located near the subunit interface in the base of the L7/L12 stalk, and near the tRNA binding site of the peptidyltransferase center. This chain is Large ribosomal subunit protein uL6, found in Pectobacterium carotovorum subsp. carotovorum (strain PC1).